Here is a 205-residue protein sequence, read N- to C-terminus: Putative epidermin response regulator (205 aa).

The ompR/PhoB-type DNA-binding region spans 103–200 (KYIKYVNDDF…ERKLGYKILI (98 aa)).

To the C-terminus of E.coli phosphate regulon transcriptional regulatory protein PhoB.

This Staphylococcus epidermidis protein is Putative epidermin response regulator (epiQ).